The following is a 394-amino-acid chain: Succinate--CoA ligase [ADP-forming] subunit beta (394 aa).

Positions 9-243 constitute an ATP-grasp domain; the sequence is KDILAGFGIA…YSQLNPLEIA (235 aa). Residues Lys45, 52-54, Glu98, Val101, and Glu106 each bind ATP; that span reads GRG. Positions 198 and 212 each coordinate Mg(2+). Residues Asn263 and 320 to 322 each bind substrate; that span reads GIM.

The protein belongs to the succinate/malate CoA ligase beta subunit family. As to quaternary structure, heterotetramer of two alpha and two beta subunits. Requires Mg(2+) as cofactor.

It carries out the reaction succinate + ATP + CoA = succinyl-CoA + ADP + phosphate. It catalyses the reaction GTP + succinate + CoA = succinyl-CoA + GDP + phosphate. It functions in the pathway carbohydrate metabolism; tricarboxylic acid cycle; succinate from succinyl-CoA (ligase route): step 1/1. In terms of biological role, succinyl-CoA synthetase functions in the citric acid cycle (TCA), coupling the hydrolysis of succinyl-CoA to the synthesis of either ATP or GTP and thus represents the only step of substrate-level phosphorylation in the TCA. The beta subunit provides nucleotide specificity of the enzyme and binds the substrate succinate, while the binding sites for coenzyme A and phosphate are found in the alpha subunit. The protein is Succinate--CoA ligase [ADP-forming] subunit beta of Pelobacter propionicus (strain DSM 2379 / NBRC 103807 / OttBd1).